We begin with the raw amino-acid sequence, 93 residues long: Alpha-defensin 13 (93 aa).

The N-terminal stretch at 1 to 19 (MKTLVLLSALVLLAFQVQA) is a signal peptide. Positions 20–58 (DPIQNTDEETKTEEQPGEEDQAVSVSFGDPEGTSLQEES) are excised as a propeptide. The disordered stretch occupies residues 22-54 (IQNTDEETKTEEQPGEEDQAVSVSFGDPEGTSL). Disulfide bonds link C64–C92, C66–C81, and C71–C91.

The protein belongs to the alpha-defensin family. In terms of tissue distribution, paneth cells of the small bowel.

Its subcellular location is the secreted. Functionally, probably contributes to the antimicrobial barrier function of the small bowel mucosa. The sequence is that of Alpha-defensin 13 (Defa13) from Mus musculus (Mouse).